The primary structure comprises 205 residues: MSNFLHLKYNEKSVSVTKALTVRFLTKRFIGEYASNFESIYKKHLCLERKQLNLEIYDPCSQTQKAKFSLTSELHWADGFVIVYDISDRSSFAFAKALIYRIREPQTSHCKRAVESAVFLVGNKRDLCHVREVGWEEGQKLALENRCQFCELSAAEQSLEVEMMFIRIIKDILINFKLKEKRRPSGSKSMAKLINNVFGKRRKSV.

The interval 1-205 (MSNFLHLKYN…NVFGKRRKSV (205 aa)) is small GTPase-like. GTP is bound by residues 11 to 18 (EKSVSVTK), 58 to 64 (DPCSQTQ), and 123 to 126 (NKRD).

This sequence belongs to the small GTPase superfamily. Ras family.

The enzyme catalyses GTP + H2O = GDP + phosphate + H(+). Binds GDP/GTP and may possess intrinsic GTPase activity. The sequence is that of Ras-related and estrogen-regulated growth inhibitor-like protein (RERGL) from Homo sapiens (Human).